The following is a 2569-amino-acid chain: Highly reducing polyketide synthase pks5 (2569 aa).

Positions 1-25 (MVVKFANGVRNRGNGDEGQRGTQRP) are disordered. The Ketosynthase family 3 (KS3) domain occupies 27 to 452 (STPIAIVGMS…GTNVHVIMEA (426 aa)). Catalysis depends on for beta-ketoacyl synthase activity residues cysteine 200, histidine 335, and histidine 375. Residues 572 to 892 (IFNGQGAQWY…PYLSCLRRNI (321 aa)) are malonyl-CoA:ACP transacylase (MAT) domain. An N-terminal hotdog fold region spans residues 960-1097 (HELLGSSVPG…GYVSAEDSSK (138 aa)). Positions 960 to 1268 (HELLGSSVPG…LRLQKIQAED (309 aa)) are dehydratase (DH) domain. Positions 960–1270 (HELLGSSVPG…LQKIQAEDDN (311 aa)) constitute a PKS/mFAS DH domain. Histidine 992 acts as the Proton acceptor; for dehydratase activity in catalysis. Positions 1117–1270 (RVRHVRPDAM…LQKIQAEDDN (154 aa)) are C-terminal hotdog fold. The active-site Proton donor; for dehydratase activity is the aspartate 1179. The interval 1457 to 1567 (LEVGAGTGGA…RKLLKPKGKL (111 aa)) is methyltransferase (CMet) domain. The tract at residues 1855 to 2170 (DLLNKIEFLE…SGTHMGKIVL (316 aa)) is enoyl reductase (ER) domain. The tract at residues 2195 to 2371 (THLIVGGLRG…AISINLGPVD (177 aa)) is ketoreductase (KR) domain. A Carrier domain is found at 2485 to 2562 (AARKLVSELI…DFAALVASRS (78 aa)). O-(pantetheine 4'-phosphoryl)serine is present on serine 2522.

Its function is as follows. Highly reducing polyketide synthase; part of the gene cluster that mediates the biosynthesis of abscisic acid (ABA), a phytohormone that acts antagonistically toward salicylic acid (SA), jasmonic acid (JA) and ethylene (ETH) signaling, to impede plant defense responses. The first step of the pathway catalyzes the reaction from farnesyl diphosphate to alpha-ionylideneethane performed by the alpha-ionylideneethane synthase abl3 via a three-step reaction mechanism involving 2 neutral intermediates, beta-farnesene and allofarnesene. The cytochrome P450 monooxygenase abl1 might then be involved in the conversion of alpha-ionylideneethane to alpha-ionylideneacetic acid. Alpha-ionylideneacetic acid is further converted to abscisic acid in 2 steps involving the cytochrome P450 monooxygenase abl2 and the short-chain dehydrogenase/reductase abl4, via the intermediates 1'-deoxy-ABA or 1',4'-trans-diol-ABA, depending on the order of action of these 2 enzymes. Abl2 is responsible for the hydroxylation of carbon atom C-1' and abl4 might be involved in the oxidation of the C-4' carbon atom. Pks5 is clearly not involved in the production of ABA. Nonetheless, the possibility cannot be excluded that pks5 may modify ABA into another compound. It also cannot be excluded the possibility that pks5 also has a function completely independent of ABA synthesis. Pks5 is not required for pathogenicity on B.napus cotyledon. In Leptosphaeria maculans (strain JN3 / isolate v23.1.3 / race Av1-4-5-6-7-8) (Blackleg fungus), this protein is Highly reducing polyketide synthase pks5.